Reading from the N-terminus, the 120-residue chain is MSLKIRLTRGGAKKRPYYRIVVADARAPRDGRFIDKVGAYDPMKAKDDPARIVLDNEKIQSWLAKGAQPTDRVLRFLDAAGLAKRPARNNPQKAEPGEKSKERAAKRAEKAAAPAEDAAA.

A disordered region spans residues 81-120 (GLAKRPARNNPQKAEPGEKSKERAAKRAEKAAAPAEDAAA). The segment covering 95-110 (EPGEKSKERAAKRAEK) has biased composition (basic and acidic residues). The span at 111-120 (AAAPAEDAAA) shows a compositional bias: low complexity.

The protein belongs to the bacterial ribosomal protein bS16 family.

This chain is Small ribosomal subunit protein bS16, found in Methylorubrum populi (strain ATCC BAA-705 / NCIMB 13946 / BJ001) (Methylobacterium populi).